Consider the following 218-residue polypeptide: ATP phosphoribosyltransferase (218 aa).

It belongs to the ATP phosphoribosyltransferase family. Short subfamily. Heteromultimer composed of HisG and HisZ subunits.

The protein localises to the cytoplasm. It carries out the reaction 1-(5-phospho-beta-D-ribosyl)-ATP + diphosphate = 5-phospho-alpha-D-ribose 1-diphosphate + ATP. It functions in the pathway amino-acid biosynthesis; L-histidine biosynthesis; L-histidine from 5-phospho-alpha-D-ribose 1-diphosphate: step 1/9. In terms of biological role, catalyzes the condensation of ATP and 5-phosphoribose 1-diphosphate to form N'-(5'-phosphoribosyl)-ATP (PR-ATP). Has a crucial role in the pathway because the rate of histidine biosynthesis seems to be controlled primarily by regulation of HisG enzymatic activity. The protein is ATP phosphoribosyltransferase of Burkholderia mallei (strain ATCC 23344).